Reading from the N-terminus, the 80-residue chain is Large ribosomal subunit protein bL31B (80 aa).

This sequence belongs to the bacterial ribosomal protein bL31 family. Type B subfamily. Part of the 50S ribosomal subunit.

In Xylella fastidiosa (strain M23), this protein is Large ribosomal subunit protein bL31B.